The following is a 414-amino-acid chain: Riboflavin biosynthesis protein RibBA (414 aa).

Residues 1 to 204 (MTRFDTIERA…IADMIAWRRK (204 aa)) form a DHBP synthase region. Residues 28–29 (RE), aspartate 33, 141–145 (RPGHT), and glutamate 165 each bind D-ribulose 5-phosphate. Glutamate 29 is a Mg(2+) binding site. Histidine 144 provides a ligand contact to Mg(2+). A GTP cyclohydrolase II region spans residues 205-414 (HEKQVVRVAE…DDLDLGETAQ (210 aa)). 255–259 (RVHSE) contributes to the GTP binding site. Zn(2+)-binding residues include cysteine 260, cysteine 271, and cysteine 273. Residues glutamine 276, 299–301 (EGR), and threonine 321 contribute to the GTP site. Aspartate 333 functions as the Proton acceptor; for GTP cyclohydrolase activity in the catalytic mechanism. Arginine 335 (nucleophile; for GTP cyclohydrolase activity) is an active-site residue. The GTP site is built by threonine 356 and lysine 361.

It in the N-terminal section; belongs to the DHBP synthase family. The protein in the C-terminal section; belongs to the GTP cyclohydrolase II family. It depends on Mg(2+) as a cofactor. The cofactor is Mn(2+). Requires Zn(2+) as cofactor.

It carries out the reaction D-ribulose 5-phosphate = (2S)-2-hydroxy-3-oxobutyl phosphate + formate + H(+). The catalysed reaction is GTP + 4 H2O = 2,5-diamino-6-hydroxy-4-(5-phosphoribosylamino)-pyrimidine + formate + 2 phosphate + 3 H(+). Its pathway is cofactor biosynthesis; riboflavin biosynthesis; 2-hydroxy-3-oxobutyl phosphate from D-ribulose 5-phosphate: step 1/1. The protein operates within cofactor biosynthesis; riboflavin biosynthesis; 5-amino-6-(D-ribitylamino)uracil from GTP: step 1/4. Its function is as follows. Catalyzes the conversion of D-ribulose 5-phosphate to formate and 3,4-dihydroxy-2-butanone 4-phosphate. Catalyzes the conversion of GTP to 2,5-diamino-6-ribosylamino-4(3H)-pyrimidinone 5'-phosphate (DARP), formate and pyrophosphate. In Nocardia farcinica (strain IFM 10152), this protein is Riboflavin biosynthesis protein RibBA.